The primary structure comprises 537 residues: Phenylalanine--tRNA ligase beta subunit (537 aa).

In terms of domain architecture, B5 spans 268–343 (FNFRPYRLNL…KSYGIENVRE (76 aa)). Residues Asp321, Asp327, Glu330, and Asp331 each coordinate Mg(2+).

The protein belongs to the phenylalanyl-tRNA synthetase beta subunit family. Type 2 subfamily. As to quaternary structure, tetramer of two alpha and two beta subunits. Requires Mg(2+) as cofactor.

It is found in the cytoplasm. The enzyme catalyses tRNA(Phe) + L-phenylalanine + ATP = L-phenylalanyl-tRNA(Phe) + AMP + diphosphate + H(+). The protein is Phenylalanine--tRNA ligase beta subunit of Thermoplasma volcanium (strain ATCC 51530 / DSM 4299 / JCM 9571 / NBRC 15438 / GSS1).